Here is a 1076-residue protein sequence, read N- to C-terminus: Bifunctional glutamine synthetase adenylyltransferase/adenylyl-removing enzyme (1076 aa).

The tract at residues 1–521 (MESSMFKPSS…LHLDIYYRPM (521 aa)) is adenylyl removase. Positions 524 to 1076 (VNAQMENDQI…LERNRRRAQR (553 aa)) are adenylyl transferase. Residues 1041 to 1056 (ATATASAATPQPQTAP) are compositionally biased toward low complexity. Residues 1041–1076 (ATATASAATPQPQTAPRPRMHVIAPRLERNRRRAQR) form a disordered region.

The protein belongs to the GlnE family. Mg(2+) serves as cofactor.

It carries out the reaction [glutamine synthetase]-O(4)-(5'-adenylyl)-L-tyrosine + phosphate = [glutamine synthetase]-L-tyrosine + ADP. The enzyme catalyses [glutamine synthetase]-L-tyrosine + ATP = [glutamine synthetase]-O(4)-(5'-adenylyl)-L-tyrosine + diphosphate. In terms of biological role, involved in the regulation of glutamine synthetase GlnA, a key enzyme in the process to assimilate ammonia. When cellular nitrogen levels are high, the C-terminal adenylyl transferase (AT) inactivates GlnA by covalent transfer of an adenylyl group from ATP to specific tyrosine residue of GlnA, thus reducing its activity. Conversely, when nitrogen levels are low, the N-terminal adenylyl removase (AR) activates GlnA by removing the adenylyl group by phosphorolysis, increasing its activity. The regulatory region of GlnE binds the signal transduction protein PII (GlnB) which indicates the nitrogen status of the cell. The sequence is that of Bifunctional glutamine synthetase adenylyltransferase/adenylyl-removing enzyme from Bifidobacterium longum subsp. infantis (strain ATCC 15697 / DSM 20088 / JCM 1222 / NCTC 11817 / S12).